Reading from the N-terminus, the 130-residue chain is MAAASFYGTGKRKSSIARVWLKPGTGVITVNHKTLDEYFGRETSKMVVKQPLELTENMGKFDIYVTVCGGGDSGQAGAIKHGITKALLEVDAALRGTLKKAGFVTRDSRIKERKKYGKKAARASFQFSKR.

This sequence belongs to the universal ribosomal protein uS9 family.

In Geotalea uraniireducens (strain Rf4) (Geobacter uraniireducens), this protein is Small ribosomal subunit protein uS9.